The following is a 304-amino-acid chain: Non-specific ribonucleoside hydrolase RihC (304 aa).

H235 is a catalytic residue.

Belongs to the IUNH family. RihC subfamily.

Hydrolyzes both purine and pyrimidine ribonucleosides with a broad-substrate specificity. The chain is Non-specific ribonucleoside hydrolase RihC from Salmonella paratyphi A (strain ATCC 9150 / SARB42).